Reading from the N-terminus, the 624-residue chain is Actin-related protein 8 (624 aa).

Residue Met-1 is modified to N-acetylmethionine. Residues 1–25 (MTQAEKGDAENGKEKGGEKEKEQRG) are compositionally biased toward basic and acidic residues. A disordered region spans residues 1 to 29 (MTQAEKGDAENGKEKGGEKEKEQRGVKRP). Ser-55 and Thr-56 together coordinate ATP. Ser-132 is modified (phosphoserine). 283 to 286 (DVGD) contributes to the ATP binding site. A Phosphoserine modification is found at Ser-412. The tract at residues 430–460 (SKQEQSAKATADRKSASKPIGFEGDLRGQSS) is disordered.

Belongs to the actin family. ARP8 subfamily. As to quaternary structure, component of the chromatin remodeling INO80 complex; specifically part of a complex module associated with the DBINO domain of INO80. Exists as monomers and dimers, but the dimer is most probably the biologically relevant form required for stable interactions with histones that exploits the twofold symmetry of the nucleosome core.

It is found in the nucleus. Its subcellular location is the chromosome. Its function is as follows. Plays an important role in the functional organization of mitotic chromosomes. Exhibits low basal ATPase activity, and unable to polymerize. Functionally, proposed core component of the chromatin remodeling INO80 complex which is involved in transcriptional regulation, DNA replication and probably DNA repair. Required for the recruitment of INO80 (and probably the INO80 complex) to sites of DNA damage Strongly prefer nucleosomes and H3-H4 tetramers over H2A-H2B dimers, suggesting it may act as a nucleosome recognition module within the complex. The sequence is that of Actin-related protein 8 (ACTR8) from Ailuropoda melanoleuca (Giant panda).